A 156-amino-acid chain; its full sequence is Small ribosomal subunit protein uS7 (156 aa).

The protein belongs to the universal ribosomal protein uS7 family. Part of the 30S ribosomal subunit. Contacts proteins S9 and S11.

One of the primary rRNA binding proteins, it binds directly to 16S rRNA where it nucleates assembly of the head domain of the 30S subunit. Is located at the subunit interface close to the decoding center, probably blocks exit of the E-site tRNA. The sequence is that of Small ribosomal subunit protein uS7 from Psychromonas ingrahamii (strain DSM 17664 / CCUG 51855 / 37).